The following is a 40-amino-acid chain: Large ribosomal subunit protein bL36 (40 aa).

This sequence belongs to the bacterial ribosomal protein bL36 family.

This chain is Large ribosomal subunit protein bL36, found in Corynebacterium kroppenstedtii (strain DSM 44385 / JCM 11950 / CIP 105744 / CCUG 35717).